Consider the following 226-residue polypeptide: Lipoprotein-releasing system ATP-binding protein LolD (226 aa).

An ABC transporter domain is found at 6 to 226 (IELKSVERHY…TLADGKVVPL (221 aa)). 42-49 (APSGTGKS) contributes to the ATP binding site.

The protein belongs to the ABC transporter superfamily. Lipoprotein translocase (TC 3.A.1.125) family. The complex is composed of two ATP-binding proteins (LolD) and two transmembrane proteins (LolC and LolE).

It localises to the cell inner membrane. Its function is as follows. Part of the ABC transporter complex LolCDE involved in the translocation of mature outer membrane-directed lipoproteins, from the inner membrane to the periplasmic chaperone, LolA. Responsible for the formation of the LolA-lipoprotein complex in an ATP-dependent manner. This Mesorhizobium japonicum (strain LMG 29417 / CECT 9101 / MAFF 303099) (Mesorhizobium loti (strain MAFF 303099)) protein is Lipoprotein-releasing system ATP-binding protein LolD.